A 485-amino-acid chain; its full sequence is Ribosomal protein uS12 methylthiotransferase RimO (485 aa).

Residues 19-135 form the MTTase N-terminal domain; sequence VKVGFISLGC…IGEVVAGILA (117 aa). Positions 28, 64, 98, 172, 176, and 179 each coordinate [4Fe-4S] cluster. The Radical SAM core domain occupies 158–387; sequence ATPGYTAYLK…MEVQQEIARR (230 aa). Positions 390 to 461 constitute a TRAM domain; that stretch reads QLQVGRELEV…DYDLLGEATE (72 aa).

Belongs to the methylthiotransferase family. RimO subfamily. Requires [4Fe-4S] cluster as cofactor.

Its subcellular location is the cytoplasm. It carries out the reaction L-aspartate(89)-[ribosomal protein uS12]-hydrogen + (sulfur carrier)-SH + AH2 + 2 S-adenosyl-L-methionine = 3-methylsulfanyl-L-aspartate(89)-[ribosomal protein uS12]-hydrogen + (sulfur carrier)-H + 5'-deoxyadenosine + L-methionine + A + S-adenosyl-L-homocysteine + 2 H(+). Catalyzes the methylthiolation of an aspartic acid residue of ribosomal protein uS12. The protein is Ribosomal protein uS12 methylthiotransferase RimO of Symbiobacterium thermophilum (strain DSM 24528 / JCM 14929 / IAM 14863 / T).